The following is a 23-amino-acid chain: Magainin-B2 (23 aa).

Expressed by the skin glands.

The protein resides in the secreted. In terms of biological role, has antimicrobial activity against Gram-negative bacterium E.coli ATCC 25922 (MIC=50 uM) and against fungus C.albicans ATCC 90028 (MIC=100 uM). Has no hemolytic activity against human erythrocytes even at high concentrations. The polypeptide is Magainin-B2 (Xenopus borealis (Kenyan clawed frog)).